Reading from the N-terminus, the 318-residue chain is Porphobilinogen deaminase (318 aa).

At C241 the chain carries S-(dipyrrolylmethanemethyl)cysteine.

This sequence belongs to the HMBS family. In terms of assembly, monomer. Dipyrromethane is required as a cofactor.

It carries out the reaction 4 porphobilinogen + H2O = hydroxymethylbilane + 4 NH4(+). It participates in porphyrin-containing compound metabolism; protoporphyrin-IX biosynthesis; coproporphyrinogen-III from 5-aminolevulinate: step 2/4. Functionally, tetrapolymerization of the monopyrrole PBG into the hydroxymethylbilane pre-uroporphyrinogen in several discrete steps. The sequence is that of Porphobilinogen deaminase from Geotalea daltonii (strain DSM 22248 / JCM 15807 / FRC-32) (Geobacter daltonii).